We begin with the raw amino-acid sequence, 429 residues long: Histidinol dehydrogenase (429 aa).

Residues Tyr-130, Gln-191, and Asn-214 each coordinate NAD(+). Substrate contacts are provided by Ser-237, Gln-259, and His-262. Zn(2+)-binding residues include Gln-259 and His-262. Catalysis depends on proton acceptor residues Glu-327 and His-328. Substrate contacts are provided by His-328, Asp-361, Glu-415, and His-420. Asp-361 is a binding site for Zn(2+). His-420 is a Zn(2+) binding site.

The protein belongs to the histidinol dehydrogenase family. Zn(2+) serves as cofactor.

The enzyme catalyses L-histidinol + 2 NAD(+) + H2O = L-histidine + 2 NADH + 3 H(+). Its pathway is amino-acid biosynthesis; L-histidine biosynthesis; L-histidine from 5-phospho-alpha-D-ribose 1-diphosphate: step 9/9. Functionally, catalyzes the sequential NAD-dependent oxidations of L-histidinol to L-histidinaldehyde and then to L-histidine. In Neisseria meningitidis serogroup A / serotype 4A (strain DSM 15465 / Z2491), this protein is Histidinol dehydrogenase.